Reading from the N-terminus, the 443-residue chain is Cyclic AMP receptor 4 (443 aa).

Residues 1–11 (MKVLQEINLTY) are Extracellular-facing. Asn-8 carries N-linked (GlcNAc...) asparagine glycosylation. Residues 12–32 (SILVIADFSSIFGCLLVLIAF) form a helical membrane-spanning segment. Over 33–44 (KKLKLLRNHITR) the chain is Cytoplasmic. The helical transmembrane segment at 45–65 (VIACFCVSSLLKDIISTGLTL) threads the bilayer. At 66–89 (SLGPQNEAGSTSFQCYLYAITITY) the chain is on the extracellular side. Residues 90–110 (GSLACWLWTLCLAFSIYNLIV) form a helical membrane-spanning segment. The Cytoplasmic segment spans residues 111-119 (KREPEPEKY). Residues 120 to 140 (EKFYHGVCWTIPLICVIVMLA) form a helical membrane-spanning segment. Residues 141-161 (KKTIEPVGNWCWISEKYVGYR) lie on the Extracellular side of the membrane. The chain crosses the membrane as a helical span at residues 162–182 (FGLFYGPFFAIWIISAVLVGL). Residues 183–208 (TSRYTYSVIRNSVSDNKDKHMTYQFK) lie on the Cytoplasmic side of the membrane. A helical transmembrane segment spans residues 209–229 (LINYIIVFLLCWVFAIVNRIL). Over 230–263 (NGLGYYPTLPNILHTYFSVSHGFFASVTFIYNNP) the chain is Extracellular. A helical transmembrane segment spans residues 264–284 (LMWRYWGSKIFLIFAKFGYFV). The Cytoplasmic portion of the chain corresponds to 285–443 (ELQRRLDRNK…DEREKKDNKF (159 aa)). Disordered regions lie at residues 325–354 (NDIS…QQSP) and 396–443 (SFEI…DNKF). Positions 332–352 (QQQQQQQQTPQQPQQQFQQQQ) are enriched in low complexity. Polar residues predominate over residues 396-410 (SFEITQPSNDLNTIE). Positions 411-425 (NNNNYNNNNNNNNNN) are enriched in low complexity. Residues 429–443 (IEKEKDEREKKDNKF) show a composition bias toward basic and acidic residues.

This sequence belongs to the G-protein coupled receptor 5 family. Post-translationally, C-terminal Ser or Thr residues may be phosphorylated.

It is found in the membrane. Its function is as follows. Receptor for cAMP. Regulates axial patterning and cellular differentiation during late development. The activity of this receptor is mediated by G proteins. This Dictyostelium discoideum (Social amoeba) protein is Cyclic AMP receptor 4 (carD).